Consider the following 349-residue polypeptide: Probable myosin light chain kinase DDB_G0275057 (349 aa).

Residues 1 to 33 form a disordered region; sequence MGCFNSKEAGAGRPKTTTQQQQQATPEPTVTTA. A compositionally biased stretch (low complexity) spans 16–33; sequence TTTQQQQQATPEPTVTTA. A Protein kinase domain is found at 56–313; that stretch reads YVVGKELGRG…AKQCLDDLWL (258 aa). ATP is bound by residues 62 to 70 and Lys85; that span reads LGRGAFSVV. Asp178 serves as the catalytic Proton acceptor.

The protein belongs to the protein kinase superfamily. CAMK Ser/Thr protein kinase family. CaMK subfamily.

The enzyme catalyses L-seryl-[myosin light chain] + ATP = O-phospho-L-seryl-[myosin light chain] + ADP + H(+). It catalyses the reaction L-threonyl-[myosin light chain] + ATP = O-phospho-L-threonyl-[myosin light chain] + ADP + H(+). Does not have a calmodulin-binding domain. In terms of biological role, may phosphorylate a specific serine in the N-terminus of a myosin light chain. This Dictyostelium discoideum (Social amoeba) protein is Probable myosin light chain kinase DDB_G0275057.